A 344-amino-acid polypeptide reads, in one-letter code: Trace amine-associated receptor 8c (344 aa).

Over 1 to 36 the chain is Extracellular; sequence MTSNFSQATLQLCYENVNASCIKTPYSPGLRVLLYM. N-linked (GlcNAc...) asparagine glycans are attached at residues N4 and N18. 2 cysteine pairs are disulfide-bonded: C21-C185 and C96-C189. Residues 37 to 57 traverse the membrane as a helical segment; that stretch reads VFGFGAVLAVCGNLLVVISVL. Topologically, residues 58–67 are cytoplasmic; that stretch reads HFKQLHSPAN. Residues 68–88 form a helical membrane-spanning segment; that stretch reads FLIASLASADFLVGISVMPFS. At 89-102 the chain is on the extracellular side; it reads MVRSIESCWYFGDT. Residues 103-127 traverse the membrane as a helical segment; the sequence is FCSLHSCCDVAFCYSSALHLCFISV. Residues 128–146 lie on the Cytoplasmic side of the membrane; the sequence is DRYIAVTDPLVYPTKFTVS. The helical transmembrane segment at 147–167 threads the bilayer; the sequence is VSGICISISWILPLVYSSAVF. The Extracellular segment spans residues 168–196; that stretch reads YTGISAMGIENLVSALNCVGGCQVVVNQD. The helical transmembrane segment at 197-217 threads the bilayer; that stretch reads WVLISFLLFFIPTLVMIILYS. At 218–260 the chain is on the cytoplasmic side; the sequence is KIFLVAKQQAVKIETSVSGSKGESSLESHKARVAKRERKAAKT. The helical transmembrane segment at 261–281 threads the bilayer; sequence LGVTVLAFIVSWLPYTIDTLI. Residues 282-295 lie on the Extracellular side of the membrane; it reads DAFMGFITPAYVYE. A helical transmembrane segment spans residues 296–319; it reads FCCWSAYYNSAMNPLIYAFFYPWF. Topologically, residues 320–344 are cytoplasmic; that stretch reads RKAMKLILSGKILKGHSSTTSLFSE.

This sequence belongs to the G-protein coupled receptor 1 family.

The protein resides in the cell membrane. Its function is as follows. Olfactory receptor activated by trace amines, such as N-methylpiperidine and N,N-dimethylcyclohexylamine. Trace amine compounds are enriched in animal body fluids and act on trace amine-associated receptors (TAARs) to elicit both intraspecific and interspecific innate behaviors. Ligand-binding causes a conformation change that triggers signaling via G(s)-class of G alpha proteins (GNAL or GNAS). This is Trace amine-associated receptor 8c from Rattus norvegicus (Rat).